Consider the following 469-residue polypeptide: Glutamate--tRNA ligase (469 aa).

Positions 9 to 19 (PSPTGFLHVGG) match the 'HIGH' region motif. The 'KMSKS' region signature appears at 236–240 (KLSKR). ATP is bound at residue Lys239.

Belongs to the class-I aminoacyl-tRNA synthetase family. Glutamate--tRNA ligase type 1 subfamily. In terms of assembly, monomer.

It localises to the cytoplasm. The enzyme catalyses tRNA(Glu) + L-glutamate + ATP = L-glutamyl-tRNA(Glu) + AMP + diphosphate. Functionally, catalyzes the attachment of glutamate to tRNA(Glu) in a two-step reaction: glutamate is first activated by ATP to form Glu-AMP and then transferred to the acceptor end of tRNA(Glu). This is Glutamate--tRNA ligase from Shewanella amazonensis (strain ATCC BAA-1098 / SB2B).